The chain runs to 560 residues: Dihydroxy-acid dehydratase (560 aa).

Asp-78 contributes to the Mg(2+) binding site. Cys-119 serves as a coordination point for [2Fe-2S] cluster. 2 residues coordinate Mg(2+): Asp-120 and Lys-121. Lys-121 bears the N6-carboxylysine mark. Cys-192 lines the [2Fe-2S] cluster pocket. Mg(2+) is bound at residue Glu-446. Residue Ser-472 is the Proton acceptor of the active site.

Belongs to the IlvD/Edd family. In terms of assembly, homodimer. The cofactor is [2Fe-2S] cluster. Requires Mg(2+) as cofactor.

It catalyses the reaction (2R)-2,3-dihydroxy-3-methylbutanoate = 3-methyl-2-oxobutanoate + H2O. The enzyme catalyses (2R,3R)-2,3-dihydroxy-3-methylpentanoate = (S)-3-methyl-2-oxopentanoate + H2O. It functions in the pathway amino-acid biosynthesis; L-isoleucine biosynthesis; L-isoleucine from 2-oxobutanoate: step 3/4. Its pathway is amino-acid biosynthesis; L-valine biosynthesis; L-valine from pyruvate: step 3/4. In terms of biological role, functions in the biosynthesis of branched-chain amino acids. Catalyzes the dehydration of (2R,3R)-2,3-dihydroxy-3-methylpentanoate (2,3-dihydroxy-3-methylvalerate) into 2-oxo-3-methylpentanoate (2-oxo-3-methylvalerate) and of (2R)-2,3-dihydroxy-3-methylbutanoate (2,3-dihydroxyisovalerate) into 2-oxo-3-methylbutanoate (2-oxoisovalerate), the penultimate precursor to L-isoleucine and L-valine, respectively. This Anaeromyxobacter dehalogenans (strain 2CP-C) protein is Dihydroxy-acid dehydratase.